The chain runs to 361 residues: dTDP-glucose 4,6-dehydratase (361 aa).

NAD(+)-binding positions include 11–12, 32–35, 58–59, 80–84, and Thr99; these read FI, DKLT, DI, and LAAES. Ser84 lines the substrate pocket. Thr133 contacts substrate. The active-site Proton donor is Asp134. Active-site proton acceptor residues include Glu135 and Tyr167. 167-171 lines the NAD(+) pocket; it reads YSASK. Position 196 (Asn196) interacts with substrate. Position 197 (Asn197) interacts with NAD(+). Substrate-binding positions include 206 to 207, 222 to 224, Arg231, Asn266, and 296 to 300; these read KL, PIY, and DRPGH.

This sequence belongs to the NAD(P)-dependent epimerase/dehydratase family. dTDP-glucose dehydratase subfamily. As to quaternary structure, homodimer. NAD(+) serves as cofactor.

The enzyme catalyses dTDP-alpha-D-glucose = dTDP-4-dehydro-6-deoxy-alpha-D-glucose + H2O. The protein operates within carbohydrate biosynthesis; dTDP-L-rhamnose biosynthesis. Its pathway is bacterial outer membrane biogenesis; LPS O-antigen biosynthesis. Its function is as follows. Catalyzes the dehydration of dTDP-D-glucose to form dTDP-6-deoxy-D-xylo-4-hexulose via a three-step process involving oxidation, dehydration and reduction. This Escherichia coli protein is dTDP-glucose 4,6-dehydratase (rfbB).